The sequence spans 314 residues: R2-like ligand binding oxidase (314 aa).

Positions 68, 101, and 104 each coordinate Mn(2+). A cross-link (3-(O4'-tyrosyl)-valine (Val-Tyr)) is located at residues 71–162 (VTEDIQPFMS…AAQVRASVTY (92 aa)). E101 provides a ligand contact to Fe cation. Fe cation contacts are provided by E167, E202, and H205.

The protein belongs to the ribonucleoside diphosphate reductase small chain family. R2-like ligand binding oxidase subfamily. Homodimer. It depends on Fe cation as a cofactor. Mn(2+) serves as cofactor.

In terms of biological role, probable oxidase that might be involved in lipid metabolism. This chain is R2-like ligand binding oxidase, found in Mycobacterium bovis (strain ATCC BAA-935 / AF2122/97).